Here is a 916-residue protein sequence, read N- to C-terminus: Protein translocase subunit SecA (916 aa).

Residues glutamine 86, 104 to 108, and aspartate 494 contribute to the ATP site; that span reads GEGKT. The tract at residues 859–916 is disordered; sequence LEAPEKPAQLQYTAPSEGGGTQTRVETRSTGRSGNPAKAAEQDAAKDAAKRPAKKKRR. Polar residues predominate over residues 880 to 891; it reads QTRVETRSTGRS. Basic and acidic residues predominate over residues 898-908; the sequence is AEQDAAKDAAK.

The protein belongs to the SecA family. In terms of assembly, monomer and homodimer. Part of the essential Sec protein translocation apparatus which comprises SecA, SecYEG and auxiliary proteins SecDF. Other proteins may also be involved.

It localises to the cell membrane. It is found in the cytoplasm. The catalysed reaction is ATP + H2O + cellular proteinSide 1 = ADP + phosphate + cellular proteinSide 2.. Functionally, part of the Sec protein translocase complex. Interacts with the SecYEG preprotein conducting channel. Has a central role in coupling the hydrolysis of ATP to the transfer of proteins into and across the cell membrane, serving as an ATP-driven molecular motor driving the stepwise translocation of polypeptide chains across the membrane. This is Protein translocase subunit SecA from Pseudarthrobacter chlorophenolicus (strain ATCC 700700 / DSM 12829 / CIP 107037 / JCM 12360 / KCTC 9906 / NCIMB 13794 / A6) (Arthrobacter chlorophenolicus).